The chain runs to 444 residues: L-cysteine:1D-myo-inositol 2-amino-2-deoxy-alpha-D-glucopyranoside ligase (444 aa).

Cysteine 66 lines the Zn(2+) pocket. Residues 66 to 69 (CGIT), threonine 81, and 104 to 106 (NVT) each bind L-cysteinyl-5'-AMP. The short motif at 68-78 (ITPYDATHLGH) is the 'HIGH' region element. The 'ERGGDP' region signature appears at 206 to 211 (EHGGDP). Tryptophan 246 contributes to the L-cysteinyl-5'-AMP binding site. Cysteine 250 provides a ligand contact to Zn(2+). L-cysteinyl-5'-AMP is bound at residue 268-270 (GSD). Histidine 275 is a Zn(2+) binding site. Position 302 (valine 302) interacts with L-cysteinyl-5'-AMP. A 'KMSKS' region motif is present at residues 308–312 (KMSKS).

The protein belongs to the class-I aminoacyl-tRNA synthetase family. MshC subfamily. In terms of assembly, monomer. Zn(2+) is required as a cofactor.

The enzyme catalyses 1D-myo-inositol 2-amino-2-deoxy-alpha-D-glucopyranoside + L-cysteine + ATP = 1D-myo-inositol 2-(L-cysteinylamino)-2-deoxy-alpha-D-glucopyranoside + AMP + diphosphate + H(+). Functionally, catalyzes the ATP-dependent condensation of GlcN-Ins and L-cysteine to form L-Cys-GlcN-Ins. The polypeptide is L-cysteine:1D-myo-inositol 2-amino-2-deoxy-alpha-D-glucopyranoside ligase (Parafrankia sp. (strain EAN1pec)).